The following is an 899-amino-acid chain: Bifunctional uridylyltransferase/uridylyl-removing enzyme (899 aa).

The tract at residues 1 to 342 is uridylyltransferase; that stretch reads MPQVDPDLFD…PGDAAGRVEP (342 aa). The interval 343-705 is uridylyl-removing; sequence LNERFQVRDG…TTQREFEGAT (363 aa). One can recognise an HD domain in the interval 461-583; it reads VDAHTLNLIK…VRDQTYLDYL (123 aa). ACT domains lie at 706-789 and 816-899; these read QIFI…IIQR and ILEI…RISI.

The protein belongs to the GlnD family. Mg(2+) is required as a cofactor.

It carries out the reaction [protein-PII]-L-tyrosine + UTP = [protein-PII]-uridylyl-L-tyrosine + diphosphate. The enzyme catalyses [protein-PII]-uridylyl-L-tyrosine + H2O = [protein-PII]-L-tyrosine + UMP + H(+). Uridylyltransferase (UTase) activity is inhibited by glutamine, while glutamine activates uridylyl-removing (UR) activity. In terms of biological role, modifies, by uridylylation and deuridylylation, the PII regulatory proteins (GlnB and homologs), in response to the nitrogen status of the cell that GlnD senses through the glutamine level. Under low glutamine levels, catalyzes the conversion of the PII proteins and UTP to PII-UMP and PPi, while under higher glutamine levels, GlnD hydrolyzes PII-UMP to PII and UMP (deuridylylation). Thus, controls uridylylation state and activity of the PII proteins, and plays an important role in the regulation of nitrogen fixation and metabolism. The sequence is that of Bifunctional uridylyltransferase/uridylyl-removing enzyme from Azotobacter vinelandii (strain DJ / ATCC BAA-1303).